The primary structure comprises 121 residues: uncharacterized protein (121 aa).

Positions 7-121 (IFCKIVRGEV…GGREMSWPPG (115 aa)) constitute an HIT domain. Residues 105-109 (HLHLH) carry the Histidine triad motif motif.

This is an uncharacterized protein from Aquifex aeolicus (strain VF5).